The chain runs to 264 residues: Propanediol uptake facilitator PduF (264 aa).

2 helical membrane passes run 10 to 30 (GAEFLGTGLFLFFGIGCLSAL) and 42 to 62 (ICIIWGLGISLAVYLTAGISG). Positions 66 to 68 (NPA) match the NPA 1 motif. The next 3 membrane-spanning stretches (helical) occupy residues 84-104 (VLPYIIAQFAGAFGGALLAYV), 143-163 (VWQAALVEVVITSILMGMIMA), and 179-199 (LLIGILVAVIGASTGPLTGFA). An NPA 2 motif is present at residues 201-203 (NPA). A helical membrane pass occupies residues 228–248 (IPYFIVPIVAPVIGACAGAAI).

This sequence belongs to the MIP/aquaporin (TC 1.A.8) family.

It is found in the cell inner membrane. In terms of biological role, probably facilitates diffusion of 1,2-propanediol (1,2-PD) into the cell. Modeling suggests active transport of 1,2-PD is required at low extracellular concentrations to allow maximal growth and saturation of PduP/PduQ within the bacterial microcompartment (BMC); this protein may be the cellular transporter. Functionally, the 1,2-PD-specific bacterial microcompartment (BMC) concentrates low levels of 1,2-PD catabolic enzymes, concentrates volatile reaction intermediates thus enhancing pathway flux and keeps the level of toxic, mutagenic propionaldehyde low. The chain is Propanediol uptake facilitator PduF from Salmonella typhimurium (strain LT2 / SGSC1412 / ATCC 700720).